A 97-amino-acid polypeptide reads, in one-letter code: YcgL domain-containing protein PputGB1_4120 (97 aa).

One can recognise a YcgL domain in the interval 3-87 (RICSIYKSPR…AEDEYIEHLP (85 aa)).

This Pseudomonas putida (strain GB-1) protein is YcgL domain-containing protein PputGB1_4120.